The sequence spans 216 residues: Small ribosomal subunit protein uS3 (216 aa).

Residues 38–106 (LRKMLKDKLY…QANIEIKEVR (69 aa)) enclose the KH type-2 domain.

The protein belongs to the universal ribosomal protein uS3 family. In terms of assembly, part of the 30S ribosomal subunit. Forms a tight complex with proteins S10 and S14.

Binds the lower part of the 30S subunit head. Binds mRNA in the 70S ribosome, positioning it for translation. The sequence is that of Small ribosomal subunit protein uS3 from Thermodesulfovibrio yellowstonii (strain ATCC 51303 / DSM 11347 / YP87).